A 204-amino-acid polypeptide reads, in one-letter code: Peptide deformylase (204 aa).

Fe cation is bound by residues cysteine 131 and histidine 174. Glutamate 175 is a catalytic residue. Histidine 178 is a Fe cation binding site.

The protein belongs to the polypeptide deformylase family. Fe(2+) is required as a cofactor.

The enzyme catalyses N-terminal N-formyl-L-methionyl-[peptide] + H2O = N-terminal L-methionyl-[peptide] + formate. In terms of biological role, removes the formyl group from the N-terminal Met of newly synthesized proteins. Requires at least a dipeptide for an efficient rate of reaction. N-terminal L-methionine is a prerequisite for activity but the enzyme has broad specificity at other positions. This chain is Peptide deformylase, found in Streptococcus mutans serotype c (strain ATCC 700610 / UA159).